A 366-amino-acid chain; its full sequence is Acetylserotonin O-methyltransferase 3 (366 aa).

Glycine 209, aspartate 232, aspartate 253, and lysine 267 together coordinate S-adenosyl-L-homocysteine. Histidine 271 (proton acceptor) is an active-site residue. Residues glutamate 302 and glutamate 332 contribute to the active site.

Belongs to the class I-like SAM-binding methyltransferase superfamily. Cation-independent O-methyltransferase family. Homodimer. Expressed at low levels in roots, shoots, leaves, stems and flowers.

Its subcellular location is the cytoplasm. The enzyme catalyses N-acetylserotonin + S-adenosyl-L-methionine = melatonin + S-adenosyl-L-homocysteine + H(+). It functions in the pathway aromatic compound metabolism; melatonin biosynthesis; melatonin from serotonin: step 1/2. In terms of biological role, methyltransferase which catalyzes the transfer of a methyl group onto N-acetylserotonin, producing melatonin (N-acetyl-5-methoxytryptamine). This is Acetylserotonin O-methyltransferase 3 from Oryza sativa subsp. japonica (Rice).